A 244-amino-acid polypeptide reads, in one-letter code: Tetraspanin-2A (244 aa).

The Cytoplasmic portion of the chain corresponds to 1 to 22; the sequence is MGIGYGASDEQLEKQIGCVKYT. Residues 23–43 form a helical membrane-spanning segment; sequence LFCFNIVAWMISTALFALTVW. The Extracellular segment spans residues 44-61; the sequence is LRAEPGFNDWLRILEAQS. The helical transmembrane segment at 62–82 threads the bilayer; that stretch reads FYIGVYVLIGISIVMMAVSFL. The Cytoplasmic portion of the chain corresponds to 83-91; sequence GCLSALMEN. The chain crosses the membrane as a helical span at residues 92–112; the sequence is TLALFVFVGTQVFGFIAIVAG. The Extracellular segment spans residues 113–206; sequence SAVLLQFSTI…TWFFEGKTGW (94 aa). The chain crosses the membrane as a helical span at residues 207–227; that stretch reads IVALAMTLGLLNVICAVMSFV. The Cytoplasmic portion of the chain corresponds to 228–244; it reads LVQAVKKEEEQASNYRR.

It belongs to the tetraspanin (TM4SF) family. Forms a complex with Ssk and mesh.

Its subcellular location is the apicolateral cell membrane. The protein localises to the cell junction. It is found in the septate junction. Required for assembly of smooth septate junctions (sSJs), together with Ssk and mesh. Important for barrier function of the midgut epithelium. The chain is Tetraspanin-2A from Drosophila melanogaster (Fruit fly).